Reading from the N-terminus, the 691-residue chain is Seven transmembrane domain-containing tyrosine-protein kinase 1 (691 aa).

At 1–33 the chain is on the extracellular side; that stretch reads MDTSCVSINQCGFCTYLFNRSIPLAGEGDGAIM. A helical transmembrane segment spans residues 34 to 54; sequence FNTMVDSMALGYIFSALYLLF. Residues 55–126 lie on the Cytoplasmic side of the membrane; the sequence is RLQRSYTYLQ…PRIINSTYFK (72 aa). Residues 127–144 form a helical membrane-spanning segment; it reads YTLFVSLWLAFEGLLLLF. Over 145 to 153 the chain is Extracellular; the sequence is LPPNSLAYP. A helical transmembrane segment spans residues 154 to 176; sequence AFVIIVGTGHIVTDNWVLVFLYG. Residues 177 to 186 lie on the Cytoplasmic side of the membrane; the sequence is KEDDRFSARR. A helical membrane pass occupies residues 187-207; sequence SFYSCTLLYLIICCTTLASFF. Residues 208–227 lie on the Extracellular side of the membrane; that stretch reads DDQTMCKKNDCQTFMFQDEY. Residues 228–248 form a helical membrane-spanning segment; it reads TSLAITVASLVVYTIVLGMTI. Residues 249-258 are Cytoplasmic-facing; that stretch reads KRSFLRPTGR. The chain crosses the membrane as a helical span at residues 259-279; the sequence is IWLLFLMGYNCISSVGALLNI. Over 280-284 the chain is Extracellular; it reads LDVDA. A helical transmembrane segment spans residues 285–305; it reads GYCFLGIAAIIYSFSYGPLLF. At 306–691 the chain is on the cytoplasmic side; it reads RTCGNDTNLL…GAEEFHYIDG (386 aa). Residues 363-634 enclose the Protein kinase domain; the sequence is FKFGQVIGEG…ANVPISNTYV (272 aa). ATP contacts are provided by residues 369–377 and K390; that span reads IGEGYFGEV. D493 (proton acceptor) is an active-site residue.

The protein belongs to the protein kinase superfamily. TKL Tyr protein kinase family.

It is found in the membrane. The catalysed reaction is L-tyrosyl-[protein] + ATP = O-phospho-L-tyrosyl-[protein] + ADP + H(+). This chain is Seven transmembrane domain-containing tyrosine-protein kinase 1 (7tmk1), found in Dictyostelium discoideum (Social amoeba).